Here is a 231-residue protein sequence, read N- to C-terminus: 7-cyano-7-deazaguanine synthase (231 aa).

An ATP-binding site is contributed by 8-18 (FSGGQDSTTCL). Cys-188, Cys-197, Cys-200, and Cys-203 together coordinate Zn(2+).

It belongs to the QueC family. The cofactor is Zn(2+).

The catalysed reaction is 7-carboxy-7-deazaguanine + NH4(+) + ATP = 7-cyano-7-deazaguanine + ADP + phosphate + H2O + H(+). The protein operates within purine metabolism; 7-cyano-7-deazaguanine biosynthesis. Functionally, catalyzes the ATP-dependent conversion of 7-carboxy-7-deazaguanine (CDG) to 7-cyano-7-deazaguanine (preQ(0)). This is 7-cyano-7-deazaguanine synthase from Escherichia coli O1:K1 / APEC.